The following is a 197-amino-acid chain: Isopentenyl-diphosphate Delta-isomerase (197 aa).

The Mn(2+) site is built by H41 and H48. A Nudix hydrolase domain is found at 46-183 (QLHRAFSVFL…AWFMTVLDAA (138 aa)). C83 is a catalytic residue. A Mn(2+)-binding site is contributed by H85. Residue E103 participates in Mg(2+) binding. Residues E130 and E132 each coordinate Mn(2+). E132 is a catalytic residue.

It belongs to the IPP isomerase type 1 family. Mg(2+) is required as a cofactor. Requires Mn(2+) as cofactor.

It is found in the cytoplasm. It carries out the reaction isopentenyl diphosphate = dimethylallyl diphosphate. It participates in isoprenoid biosynthesis; dimethylallyl diphosphate biosynthesis; dimethylallyl diphosphate from isopentenyl diphosphate: step 1/1. In terms of biological role, catalyzes the 1,3-allylic rearrangement of the homoallylic substrate isopentenyl (IPP) to its highly electrophilic allylic isomer, dimethylallyl diphosphate (DMAPP). In Streptomyces griseus subsp. griseus (strain JCM 4626 / CBS 651.72 / NBRC 13350 / KCC S-0626 / ISP 5235), this protein is Isopentenyl-diphosphate Delta-isomerase.